The sequence spans 232 residues: 5'-methylthioadenosine/S-adenosylhomocysteine nucleosidase (232 aa).

The active-site Proton acceptor is glutamate 12. Residues glycine 78, isoleucine 152, and 173-174 (ME) contribute to the substrate site. The active-site Proton donor is the aspartate 197.

This sequence belongs to the PNP/UDP phosphorylase family. MtnN subfamily. Homodimer.

It carries out the reaction S-adenosyl-L-homocysteine + H2O = S-(5-deoxy-D-ribos-5-yl)-L-homocysteine + adenine. It catalyses the reaction S-methyl-5'-thioadenosine + H2O = 5-(methylsulfanyl)-D-ribose + adenine. The catalysed reaction is 5'-deoxyadenosine + H2O = 5-deoxy-D-ribose + adenine. It participates in amino-acid biosynthesis; L-methionine biosynthesis via salvage pathway; S-methyl-5-thio-alpha-D-ribose 1-phosphate from S-methyl-5'-thioadenosine (hydrolase route): step 1/2. Catalyzes the irreversible cleavage of the glycosidic bond in both 5'-methylthioadenosine (MTA) and S-adenosylhomocysteine (SAH/AdoHcy) to adenine and the corresponding thioribose, 5'-methylthioribose and S-ribosylhomocysteine, respectively. Also cleaves 5'-deoxyadenosine, a toxic by-product of radical S-adenosylmethionine (SAM) enzymes, into 5-deoxyribose and adenine. Thus, is required for in vivo function of the radical SAM enzymes biotin synthase and lipoic acid synthase, that are inhibited by 5'-deoxyadenosine accumulation. This Erwinia tasmaniensis (strain DSM 17950 / CFBP 7177 / CIP 109463 / NCPPB 4357 / Et1/99) protein is 5'-methylthioadenosine/S-adenosylhomocysteine nucleosidase.